The primary structure comprises 76 residues: Translational regulator CsrA (76 aa).

It belongs to the CsrA/RsmA family. As to quaternary structure, homodimer; the beta-strands of each monomer intercalate to form a hydrophobic core, while the alpha-helices form wings that extend away from the core.

The protein resides in the cytoplasm. In terms of biological role, a translational regulator that binds mRNA to regulate translation initiation and/or mRNA stability. Usually binds in the 5'-UTR at or near the Shine-Dalgarno sequence preventing ribosome-binding, thus repressing translation. Its main target seems to be the major flagellin gene, while its function is anatagonized by FliW. The polypeptide is Translational regulator CsrA (Wolinella succinogenes (strain ATCC 29543 / DSM 1740 / CCUG 13145 / JCM 31913 / LMG 7466 / NCTC 11488 / FDC 602W) (Vibrio succinogenes)).